Here is an 84-residue protein sequence, read N- to C-terminus: Large ribosomal subunit protein bL27 (84 aa).

Positions 1–21 are disordered; the sequence is MAHKKGGGSTKNGRDSNPKYL.

This sequence belongs to the bacterial ribosomal protein bL27 family.

This chain is Large ribosomal subunit protein bL27, found in Chlorobaculum parvum (strain DSM 263 / NCIMB 8327) (Chlorobium vibrioforme subsp. thiosulfatophilum).